We begin with the raw amino-acid sequence, 148 residues long: Putative ankyrin repeat protein RF_1158 (148 aa).

An ANK repeat occupies 82–115; it reads RPTTALGIAIAQGNSEEVIKYLLANGADPKLAFD.

The polypeptide is Putative ankyrin repeat protein RF_1158 (Rickettsia felis (strain ATCC VR-1525 / URRWXCal2) (Rickettsia azadi)).